Consider the following 518-residue polypeptide: Glutamate--cysteine ligase (518 aa).

The protein belongs to the glutamate--cysteine ligase type 1 family. Type 1 subfamily.

The enzyme catalyses L-cysteine + L-glutamate + ATP = gamma-L-glutamyl-L-cysteine + ADP + phosphate + H(+). The protein operates within sulfur metabolism; glutathione biosynthesis; glutathione from L-cysteine and L-glutamate: step 1/2. The polypeptide is Glutamate--cysteine ligase (Shigella dysenteriae serotype 1 (strain Sd197)).